Here is a 221-residue protein sequence, read N- to C-terminus: Iron-sulfur cluster repair protein YtfE (221 aa).

The protein belongs to the RIC family. YtfE subfamily. As to quaternary structure, homodimer.

The protein localises to the cytoplasm. Its function is as follows. Di-iron-containing protein involved in the repair of iron-sulfur clusters damaged by oxidative and nitrosative stress conditions. The chain is Iron-sulfur cluster repair protein YtfE from Pectobacterium atrosepticum (strain SCRI 1043 / ATCC BAA-672) (Erwinia carotovora subsp. atroseptica).